The following is a 283-amino-acid chain: 4-hydroxy-tetrahydrodipicolinate synthase (283 aa).

Position 46 (T46) interacts with pyruvate. Y134 functions as the Proton donor/acceptor in the catalytic mechanism. The active-site Schiff-base intermediate with substrate is the K162. I208 contributes to the pyruvate binding site.

It belongs to the DapA family. In terms of assembly, homotetramer; dimer of dimers.

It is found in the cytoplasm. The enzyme catalyses L-aspartate 4-semialdehyde + pyruvate = (2S,4S)-4-hydroxy-2,3,4,5-tetrahydrodipicolinate + H2O + H(+). Its pathway is amino-acid biosynthesis; L-lysine biosynthesis via DAP pathway; (S)-tetrahydrodipicolinate from L-aspartate: step 3/4. Its function is as follows. Catalyzes the condensation of (S)-aspartate-beta-semialdehyde [(S)-ASA] and pyruvate to 4-hydroxy-tetrahydrodipicolinate (HTPA). The protein is 4-hydroxy-tetrahydrodipicolinate synthase of Methanothermobacter thermautotrophicus (strain ATCC 29096 / DSM 1053 / JCM 10044 / NBRC 100330 / Delta H) (Methanobacterium thermoautotrophicum).